We begin with the raw amino-acid sequence, 637 residues long: 1-deoxy-D-xylulose-5-phosphate synthase (637 aa).

Thiamine diphosphate contacts are provided by residues His-82 and 123–125 (GHA). Mg(2+) is bound at residue Asp-154. Thiamine diphosphate contacts are provided by residues 155-156 (GS), Asn-183, Tyr-295, and Glu-378. Asn-183 contacts Mg(2+).

This sequence belongs to the transketolase family. DXPS subfamily. Homodimer. Mg(2+) serves as cofactor. Requires thiamine diphosphate as cofactor.

It carries out the reaction D-glyceraldehyde 3-phosphate + pyruvate + H(+) = 1-deoxy-D-xylulose 5-phosphate + CO2. It functions in the pathway metabolic intermediate biosynthesis; 1-deoxy-D-xylulose 5-phosphate biosynthesis; 1-deoxy-D-xylulose 5-phosphate from D-glyceraldehyde 3-phosphate and pyruvate: step 1/1. Its function is as follows. Catalyzes the acyloin condensation reaction between C atoms 2 and 3 of pyruvate and glyceraldehyde 3-phosphate to yield 1-deoxy-D-xylulose-5-phosphate (DXP). The chain is 1-deoxy-D-xylulose-5-phosphate synthase from Lawsonia intracellularis (strain PHE/MN1-00).